Reading from the N-terminus, the 313-residue chain is Potassium channel subfamily K member 6 (313 aa).

Topologically, residues Met-1–Gly-4 are cytoplasmic. The chain crosses the membrane as a helical span at residues Ala-5 to Val-25. 2 N-linked (GlcNAc...) asparagine glycosylation sites follow: Asn-79 and Asn-85. The pore-forming intramembrane region spans Ala-90 to Leu-115. Residues Thr-106, Val-107, Gly-108, and Tyr-109 each contribute to the K(+) site. The selectivity filter 1 stretch occupies residues Thr-106–Tyr-111. Residues Ala-121–Ser-141 form a helical membrane-spanning segment. Residues Ala-142–His-172 lie on the Cytoplasmic side of the membrane. The chain crosses the membrane as a helical span at residues Leu-173–Ala-193. An intramembrane region (pore-forming) is located at residues Trp-199–Gly-223. Positions 214, 215, and 216 each coordinate K(+). Residues Thr-214 to Asp-219 form a selectivity filter 2 region. Residues Val-236–Phe-256 form a helical membrane-spanning segment. Topologically, residues Arg-257–Arg-313 are cytoplasmic. Short sequence motifs (lysosomal targeting signal) lie at residues Asp-282–Leu-290 and Tyr-308–Pro-312.

It belongs to the two pore domain potassium channel (TC 1.A.1.8) family. In terms of assembly, homodimer; disulfide-linked. Post-translationally, N-glycosylation is necessary for targeting to lysosomes.

The protein localises to the late endosome membrane. Its subcellular location is the lysosome membrane. The catalysed reaction is K(+)(in) = K(+)(out). In terms of biological role, k(+) channel that conducts outward rectifying currents at the membranes of the endolysosomal system. Active in lysosomes where it regulates lysosome numbers and size. In macrophages, enables K(+) efflux coupled to ATP-induced NLRP3 inflammasome activation upon bacterial infection. Cooperates with ATP-gated P2RX7 to activate NLRP3 inflammasome, with P2RX7 conducting Ca(2+) and Na(+) influx that sets the membrane potential for K(+) efflux. In Mus musculus (Mouse), this protein is Potassium channel subfamily K member 6.